Consider the following 342-residue polypeptide: Zinc transporter ZIP11 (342 aa).

A run of 7 helical transmembrane segments spans residues 12 to 32 (LLGT…VFVF), 44 to 64 (LGFA…APAV), 72 to 92 (GFGA…AAFV), 194 to 214 (IALL…AVGV), 263 to 285 (FWYG…FAVV), 290 to 307 (ILPY…YVVM), and 322 to 342 (LASW…VGLG).

The protein belongs to the ZIP transporter (TC 2.A.5) family.

Its subcellular location is the cell membrane. The protein localises to the nucleus. The protein resides in the cytoplasm. It localises to the golgi apparatus. It catalyses the reaction Zn(2+)(in) = Zn(2+)(out). It carries out the reaction Cu(2+)(in) = Cu(2+)(out). In terms of biological role, zinc importer that regulates cytosolic zinc concentrations either via zinc influx from the extracellular compartment or efflux from intracellular organelles such as Golgi apparatus. May transport copper ions as well. The transport mechanism remains to be elucidated. In Homo sapiens (Human), this protein is Zinc transporter ZIP11 (SLC39A11).